The primary structure comprises 60 residues: Protein AC4 (60 aa).

This sequence belongs to the geminiviridae protein AC4/C4 family.

Pathogenicity determinant. May act as a suppressor of RNA-mediated gene silencing, also known as post-transcriptional gene silencing (PTGS), a mechanism of plant viral defense that limits the accumulation of viral RNAs. The polypeptide is Protein AC4 (Pepper huasteco yellow vein virus (PHYVV)).